A 145-amino-acid chain; its full sequence is uncharacterized protein (145 aa).

A helical membrane pass occupies residues 104 to 124; that stretch reads IEVIILSHHFVIGFSFLLGLL.

It localises to the membrane. This is an uncharacterized protein from Saccharomyces cerevisiae (strain ATCC 204508 / S288c) (Baker's yeast).